The following is a 207-amino-acid chain: Dephospho-CoA kinase (207 aa).

Residues 11–207 (RIGLTGGIAS…LLKMSPTAEL (197 aa)) form the DPCK domain. Position 19-24 (19-24 (ASGKSS)) interacts with ATP.

It belongs to the CoaE family.

It localises to the cytoplasm. It carries out the reaction 3'-dephospho-CoA + ATP = ADP + CoA + H(+). Its pathway is cofactor biosynthesis; coenzyme A biosynthesis; CoA from (R)-pantothenate: step 5/5. Catalyzes the phosphorylation of the 3'-hydroxyl group of dephosphocoenzyme A to form coenzyme A. This Synechococcus sp. (strain CC9605) protein is Dephospho-CoA kinase.